Here is a 483-residue protein sequence, read N- to C-terminus: Isocitrate dehydrogenase [NADP] (483 aa).

Position 74 (threonine 74) interacts with NADP(+). D-threo-isocitrate-binding residues include serine 83, asparagine 85, arginine 89, arginine 99, and arginine 121. A Mg(2+)-binding site is contributed by aspartate 232. NADP(+) is bound by residues 264 to 270 and asparagine 277; that span reads HGSAPDI.

Belongs to the isocitrate and isopropylmalate dehydrogenases family. Homodimer. The cofactor is Mg(2+). Mn(2+) is required as a cofactor.

The catalysed reaction is D-threo-isocitrate + NADP(+) = 2-oxoglutarate + CO2 + NADPH. Catalyzes the oxidative decarboxylation of isocitrate to 2-oxoglutarate and carbon dioxide with the concomitant reduction of NADP(+). The sequence is that of Isocitrate dehydrogenase [NADP] (icd) from Rickettsia bellii (strain RML369-C).